Consider the following 309-residue polypeptide: Peptide methionine sulfoxide reductase MsrA/MsrB (309 aa).

The peptide methionine sulfoxide reductase A stretch occupies residues 1-153; the sequence is MIYLAGGCFW…PNGYCHIDIN (153 aa). Cys8 is an active-site residue. Positions 170-293 constitute a MsrB domain; the sequence is ATEIKEKLSA…NSLSITFIPK (124 aa). Cys282 acts as the Nucleophile in catalysis.

In the N-terminal section; belongs to the MsrA Met sulfoxide reductase family. It in the C-terminal section; belongs to the MsrB Met sulfoxide reductase family.

The enzyme catalyses L-methionyl-[protein] + [thioredoxin]-disulfide + H2O = L-methionyl-(S)-S-oxide-[protein] + [thioredoxin]-dithiol. The catalysed reaction is [thioredoxin]-disulfide + L-methionine + H2O = L-methionine (S)-S-oxide + [thioredoxin]-dithiol. It carries out the reaction L-methionyl-[protein] + [thioredoxin]-disulfide + H2O = L-methionyl-(R)-S-oxide-[protein] + [thioredoxin]-dithiol. Its function is as follows. Has an important function as a repair enzyme for proteins that have been inactivated by oxidation. Catalyzes the reversible oxidation-reduction of methionine sulfoxide in proteins to methionine. The chain is Peptide methionine sulfoxide reductase MsrA/MsrB (msrAB) from Streptococcus pyogenes serotype M18 (strain MGAS8232).